The sequence spans 188 residues: MICTPKVGLNNQLTKVQFFMTKYNFLFKQQVIEFYLQNDKNSSLTRRHFQLAETTLERWINQFNHSGINGLALLGKKRNYSPEFKLNVIQAVKNGKFSAEAACLHFGIANSGVVSQWLQAFEKQGINGLIPKPKGRPTMKLQYPKMPPKPKTREEELELENLRLRAENAILKKLQELNQQKMQKKPLS.

The disordered stretch occupies residues 133-153; that stretch reads PKGRPTMKLQYPKMPPKPKTR.

This sequence belongs to the IS150/IS1296 orfA family.

This is an uncharacterized protein from Haemophilus influenzae (strain ATCC 51907 / DSM 11121 / KW20 / Rd).